A 424-amino-acid polypeptide reads, in one-letter code: Ornithine aminotransferase (424 aa).

K272 bears the N6-(pyridoxal phosphate)lysine mark. K390 is covalently cross-linked (Glycyl lysine isopeptide (Lys-Gly) (interchain with G-Cter in ubiquitin)).

Belongs to the class-III pyridoxal-phosphate-dependent aminotransferase family. It depends on pyridoxal 5'-phosphate as a cofactor.

The protein localises to the cytoplasm. The catalysed reaction is a 2-oxocarboxylate + L-ornithine = L-glutamate 5-semialdehyde + an L-alpha-amino acid. Its pathway is amino-acid biosynthesis; L-proline biosynthesis; L-glutamate 5-semialdehyde from L-ornithine: step 1/1. By arginine and urea. In terms of biological role, catalyzes the transamination of ornithine into L-glutamate gamma-semialdehyde, the second step of arginine degradation. The polypeptide is Ornithine aminotransferase (CAR2) (Saccharomyces cerevisiae (strain ATCC 204508 / S288c) (Baker's yeast)).